Consider the following 368-residue polypeptide: Biglycan (368 aa).

The N-terminal stretch at 1–16 is a signal peptide; sequence MWPLWRLVSLLALSQA. A propeptide spanning residues 17 to 37 is cleaved from the precursor; sequence LPFEQRGFWDFTLDDGPFMMN. O-linked (Xyl...) (glycosaminoglycan) serine glycosylation is found at Ser-42 and Ser-47. Disulfide bonds link Cys-63–Cys-69 and Cys-67–Cys-76. LRR repeat units follow at residues 82–102, 103–126, 127–150, 151–171, 172–195, 196–220, 221–241, 242–265, 266–289, 290–312, 313–342, and 343–368; these read KSVPKEISPDTTLLDLQNNDI, SELRKDDFKGLQHLYALVLVNNKI, SKIHEKAFSPLRKLQKLYISKNHL, VEIPPNLPSSLVELRIHDNRI, RKVPKGVFSGLRNMNCIEMGGNPL, ENSGFEPGAFDGLKLNYLRISEAKL, TGIPKDLPETLNELHLDHNKI, QAIELEDLLRYSKLYRLGLGHNQI, RMIENGSLSFLPTLRELHLDNNKL, ARVPSGLPDLKLLQVVYLHSNNI, TKVGVNDFCPMGFGVKRAYYNGISLFNNPV, and PYWEVQPATFRCVTDRLAIQFGNYKK. 2 O-linked (Xyl...) (glycosaminoglycan) serine glycosylation sites follow: Ser-180 and Ser-198. Asn-270 and Asn-311 each carry an N-linked (GlcNAc...) asparagine glycan. Cysteines 321 and 354 form a disulfide.

This sequence belongs to the small leucine-rich proteoglycan (SLRP) family. SLRP class I subfamily. In terms of assembly, homodimer. Forms a ternary complex with MFAP2 and ELN. The two attached glycosaminoglycan chains can be either chondroitin sulfate or dermatan sulfate. In terms of tissue distribution, detected in placenta (at protein level). Found in several connective tissues, especially in articular cartilages.

The protein localises to the secreted. The protein resides in the extracellular space. Its subcellular location is the extracellular matrix. In terms of biological role, may be involved in collagen fiber assembly. This chain is Biglycan (BGN), found in Homo sapiens (Human).